The sequence spans 303 residues: Glycine--tRNA ligase alpha subunit (303 aa).

This sequence belongs to the class-II aminoacyl-tRNA synthetase family. In terms of assembly, tetramer of two alpha and two beta subunits.

The protein resides in the cytoplasm. It catalyses the reaction tRNA(Gly) + glycine + ATP = glycyl-tRNA(Gly) + AMP + diphosphate. In Syntrophomonas wolfei subsp. wolfei (strain DSM 2245B / Goettingen), this protein is Glycine--tRNA ligase alpha subunit.